The chain runs to 467 residues: Probable lipase C1672.09 (467 aa).

Residues 1–17 (MIQLPFIQRLKWEEYMA) are Cytoplasmic-facing. A helical; Signal-anchor for type II membrane protein transmembrane segment spans residues 18–38 (LFLGFFFVIFEKLLSCLAFMI). Topologically, residues 39-467 (HNTLGLFYRS…NHIAPRNKPI (429 aa)) are lumenal. Serine 66 carries the phosphoserine modification. The AB hydrolase-1 domain occupies 127–421 (PVVYCHHGLL…SYEHLDMIWA (295 aa)). Serine 222 (nucleophile) is an active-site residue. Residues asparagine 311 and asparagine 316 are each glycosylated (N-linked (GlcNAc...) asparagine). Catalysis depends on charge relay system residues aspartate 389 and histidine 415. Basic and acidic residues predominate over residues 440 to 457 (HHPPEHEENDKENREIQK). Positions 440 to 467 (HHPPEHEENDKENREIQKNHIAPRNKPI) are disordered.

Belongs to the AB hydrolase superfamily. Lipase family.

It is found in the cytoplasm. The protein localises to the membrane. Probable lipase. In Schizosaccharomyces pombe (strain 972 / ATCC 24843) (Fission yeast), this protein is Probable lipase C1672.09.